The following is a 420-amino-acid chain: NEDD8-specific protease 1 (420 aa).

Over residues 257-281 (KSSDSSETSHESSNSNLKKSSESGS) the composition is skewed to low complexity. The tract at residues 257–420 (KSSDSSETSH…EELVSGDFPF (164 aa)) is disordered. Residues 286–296 (NNHESDKDLHH) are compositionally biased toward basic and acidic residues. Positions 297–310 (EGHHHHHHHHHHHH) are enriched in basic residues. The segment covering 311-324 (SHDDDPSSPAEKKQ) has biased composition (basic and acidic residues). Phosphoserine is present on residues S329, S340, and S351. The span at 355 to 377 (NKEDHLPLLSDEKLDKSAIDKIE) shows a compositional bias: basic and acidic residues.

It belongs to the peptidase C48 family. Interacts with csn1. It is, however, not a component of the signalosome.

It localises to the cytoplasm. Protease that catalyzes two essential functions in the NEDD8 pathway: processing of full-length NEDD8 to its mature form and deconjugation of NEDD8 from targeted proteins such as the pcu1, pcu2 and pcu4 cullins and other proteins. This chain is NEDD8-specific protease 1 (nep1), found in Schizosaccharomyces pombe (strain 972 / ATCC 24843) (Fission yeast).